The following is a 385-amino-acid chain: Circadian-associated transcriptional repressor (385 aa).

The segment covering methionine 1–serine 26 has biased composition (low complexity). 3 disordered regions span residues methionine 1 to threonine 108, glycine 203 to aspartate 233, and glycine 365 to leucine 385. Over residues aspartate 33–arginine 45 the composition is skewed to basic and acidic residues. Residues valine 70–histidine 79 are compositionally biased toward polar residues.

In terms of assembly, interacts with PER2, CRY2, BHLHE41, HDAC1 and NR3C1. Interacts with BMAL1.

The protein localises to the nucleus. The protein resides in the PML body. Functionally, transcriptional repressor which forms a negative regulatory component of the circadian clock and acts independently of the circadian transcriptional repressors: CRY1, CRY2 and BHLHE41. In a histone deacetylase-dependent manner represses the transcriptional activator activity of the CLOCK-BMAL1 heterodimer. Abrogates the interaction of BMAL1 with the transcriptional coactivator CREBBP and can repress the histone acetyl-transferase activity of the CLOCK-BMAL1 heterodimer, reducing histone acetylation of its target genes. Rhythmically binds the E-box elements (5'-CACGTG-3') on circadian gene promoters and its occupancy shows circadian oscillation antiphasic to BMAL1. Interacts with the glucocorticoid receptor (NR3C1) and contributes to the repressive function in the glucocorticoid response. The chain is Circadian-associated transcriptional repressor (CIART) from Homo sapiens (Human).